The following is a 62-amino-acid chain: MKLTCVLVVLLLVLPFGDLIGVCSTPEGSCVHNGCICQNAPCCHPSGCNWVNVCPGFLWDRS.

A signal peptide spans 1–19; that stretch reads MKLTCVLVVLLLVLPFGDL.

Belongs to the conotoxin O1 superfamily. In terms of processing, contains 4 disulfide bonds. Expressed by the venom duct.

Its subcellular location is the secreted. Its function is as follows. Probable neurotoxin. In Californiconus californicus (California cone), this protein is Conotoxin Cal12.2e.